Reading from the N-terminus, the 441-residue chain is Trigger factor (441 aa).

Residues 175-260 enclose the PPIase FKBP-type domain; that stretch reads GDKVVIDYNS…LVSIMVPKDV (86 aa).

The protein belongs to the FKBP-type PPIase family. Tig subfamily.

The protein resides in the cytoplasm. The catalysed reaction is [protein]-peptidylproline (omega=180) = [protein]-peptidylproline (omega=0). Functionally, involved in protein export. Acts as a chaperone by maintaining the newly synthesized protein in an open conformation. Functions as a peptidyl-prolyl cis-trans isomerase. In Anaplasma marginale (strain St. Maries), this protein is Trigger factor.